Here is a 360-residue protein sequence, read N- to C-terminus: DNA replication and repair protein RecF (360 aa).

Residue 30-37 (GQNGSGKT) coordinates ATP.

Belongs to the RecF family.

It localises to the cytoplasm. Functionally, the RecF protein is involved in DNA metabolism; it is required for DNA replication and normal SOS inducibility. RecF binds preferentially to single-stranded, linear DNA. It also seems to bind ATP. The chain is DNA replication and repair protein RecF from Shewanella sp. (strain MR-4).